A 185-amino-acid chain; its full sequence is Isopentenyl-diphosphate Delta-isomerase (185 aa).

Mn(2+)-binding residues include His-27 and His-34. Residues 32-168 (PLHLAFSCHL…PWAFSPWLTL (137 aa)) form the Nudix hydrolase domain. The active site involves Cys-69. Cys-69 is a binding site for Mg(2+). Residue His-71 participates in Mn(2+) binding. Glu-89 lines the Mg(2+) pocket. 2 residues coordinate Mn(2+): Glu-118 and Glu-120. Glu-120 is an active-site residue.

It belongs to the IPP isomerase type 1 family. It depends on Mg(2+) as a cofactor. Mn(2+) serves as cofactor.

It localises to the cytoplasm. It catalyses the reaction isopentenyl diphosphate = dimethylallyl diphosphate. Its pathway is isoprenoid biosynthesis; dimethylallyl diphosphate biosynthesis; dimethylallyl diphosphate from isopentenyl diphosphate: step 1/1. Catalyzes the 1,3-allylic rearrangement of the homoallylic substrate isopentenyl (IPP) to its highly electrophilic allylic isomer, dimethylallyl diphosphate (DMAPP). The protein is Isopentenyl-diphosphate Delta-isomerase of Leifsonia xyli subsp. xyli (strain CTCB07).